Here is a 331-residue protein sequence, read N- to C-terminus: RNA/RNP complex-1-interacting phosphatase (331 aa).

Residues 61-208 (FEKHLAPEEC…LRNGPIRKNW (148 aa)) enclose the Tyrosine-protein phosphatase domain. Residue Cys152 is the Phosphocysteine intermediate of the active site. 153 to 158 (THGVNR) is a binding site for substrate. The active-site Proton donor/acceptor is Arg158.

The protein belongs to the protein-tyrosine phosphatase family. Non-receptor class dual specificity subfamily. Monomer. May interact with SFRS7 and SFRS9/SRP30C.

It is found in the nucleus. The protein resides in the nucleus speckle. Its function is as follows. Possesses RNA 5'-triphosphatase and diphosphatase activities, but displays a poor protein-tyrosine phosphatase activity. In addition, has phosphatase activity with ATP, ADP and O-methylfluorescein phosphate (in vitro). Binds to RNA. May participate in nuclear mRNA metabolism. This Bos taurus (Bovine) protein is RNA/RNP complex-1-interacting phosphatase (DUSP11).